We begin with the raw amino-acid sequence, 225 residues long: 2-amino-5-formylamino-6-ribosylaminopyrimidin-4(3H)-one 5'-monophosphate deformylase (225 aa).

Positions 28, 30, 39, and 107 each coordinate Fe cation.

It belongs to the creatininase superfamily. FAPy deformylase family. Homodimer. Fe(2+) serves as cofactor. Zn(2+) is required as a cofactor.

The catalysed reaction is 2-amino-5-formylamino-6-(5-phospho-D-ribosylamino)pyrimidin-4(3H)-one + H2O = 2,5-diamino-6-(1-D-ribosylamino)pyrimidin-4(3H)-one 5'-phosphate + formate + H(+). It functions in the pathway cofactor biosynthesis; coenzyme F420 biosynthesis. The protein operates within cofactor biosynthesis; riboflavin biosynthesis. Catalyzes the hydrolysis of the formamide of 2-amino-5-formylamino-6-ribosylamino-4(3H)-pyrimidinone 5'-monophosphate (FAPy) to form 2,5-diamino-6-ribosylamino-4(3H)-pyrimidinone 5'-phosphate (APy). The protein is 2-amino-5-formylamino-6-ribosylaminopyrimidin-4(3H)-one 5'-monophosphate deformylase of Methanocaldococcus fervens (strain DSM 4213 / JCM 15782 / AG86) (Methanococcus fervens).